A 306-amino-acid chain; its full sequence is Pseudouridine-5'-phosphate glycosidase (306 aa).

Glu27 functions as the Proton donor in the catalytic mechanism. Positions 88 and 108 each coordinate substrate. Asp140 lines the Mn(2+) pocket. Ser142–Asp144 contacts substrate. Lys161 acts as the Nucleophile in catalysis.

This sequence belongs to the pseudouridine-5'-phosphate glycosidase family. Homotrimer. Mn(2+) is required as a cofactor.

It catalyses the reaction D-ribose 5-phosphate + uracil = psi-UMP + H2O. Its function is as follows. Catalyzes the reversible cleavage of pseudouridine 5'-phosphate (PsiMP) to ribose 5-phosphate and uracil. Functions biologically in the cleavage direction, as part of a pseudouridine degradation pathway. This is Pseudouridine-5'-phosphate glycosidase from Petrotoga mobilis (strain DSM 10674 / SJ95).